Here is a 187-residue protein sequence, read N- to C-terminus: MAAQDCPVRPPVIAPATGGVDAPIVNVAPVQKILDVCRAMSLWPMTFGLACCAIEMMAVGMARFDISRFGAEVFRPSPRQSDLMIVAGTVTRKMAPALVRLYEQMPAPRYVMALGNCAISGGPFNFEGQYAIVEGVDNLVPVDVYVPGCPPRPEALLEGLFQIQHKITGRRWWPVPAEISGSMGGGA.

Residues C51, C52, C117, and C149 each contribute to the [4Fe-4S] cluster site.

Belongs to the complex I 20 kDa subunit family. As to quaternary structure, NDH-1 is composed of 14 different subunits. Subunits NuoB, C, D, E, F, and G constitute the peripheral sector of the complex. The cofactor is [4Fe-4S] cluster.

It localises to the cell inner membrane. The catalysed reaction is a quinone + NADH + 5 H(+)(in) = a quinol + NAD(+) + 4 H(+)(out). Functionally, NDH-1 shuttles electrons from NADH, via FMN and iron-sulfur (Fe-S) centers, to quinones in the respiratory chain. The immediate electron acceptor for the enzyme in this species is believed to be ubiquinone. Couples the redox reaction to proton translocation (for every two electrons transferred, four hydrogen ions are translocated across the cytoplasmic membrane), and thus conserves the redox energy in a proton gradient. The protein is NADH-quinone oxidoreductase subunit B of Nitratidesulfovibrio vulgaris (strain DSM 19637 / Miyazaki F) (Desulfovibrio vulgaris).